The following is a 357-amino-acid chain: 3'(2'),5'-bisphosphate nucleotidase (357 aa).

Catalysis depends on Asp-49, which acts as the Proton acceptor. The Mg(2+) site is built by Glu-72, Asp-142, Ile-144, and Asp-145. Thr-147 (proton acceptor) is an active-site residue. Adenosine 3',5'-bisphosphate-binding residues include Thr-147, His-241, Ser-264, Lys-267, Arg-281, and Asp-294. The AMP site is built by His-241, Ser-264, Lys-267, Arg-281, and Asp-294. Asp-294 serves as a coordination point for Mg(2+).

The protein belongs to the inositol monophosphatase superfamily. Mg(2+) serves as cofactor.

Its subcellular location is the cytoplasm. It is found in the nucleus. It carries out the reaction 3'-phosphoadenylyl sulfate + H2O = adenosine 5'-phosphosulfate + phosphate. The enzyme catalyses adenosine 3',5'-bisphosphate + H2O = AMP + phosphate. It catalyses the reaction adenosine 2',5'-bisphosphate + H2O = AMP + phosphate. Phosphatase activity is very sensitive to lithium and moderately sensitive to sodium. The inhibitory effects of lithium and sodium are overcome by high concentrations of potassium. Lithium exerts its inhibitory action by blocking the products of the PAP hydrolysis at the active site. Its function is as follows. Phosphatase that converts adenosine 3'-phosphate 5'-phosphosulfate (PAPS) to adenosine 5'-phosphosulfate (APS) and 3'(2')-phosphoadenosine 5'-phosphate (PAP) to AMP. May regulate the flux of sulfur in the sulfur-activation pathway by converting PAPS to APS. Involved in salt tolerance. Confers resistance to lithium. Shows no activity on inositol mono- and diphosphates, 3'-AMP, AMP, nicotinamide adenine dinucleotide phosphate (NADP), and p-nitrophenylphosphate. This chain is 3'(2'),5'-bisphosphate nucleotidase (MET22), found in Saccharomyces cerevisiae (strain ATCC 204508 / S288c) (Baker's yeast).